The chain runs to 260 residues: Malonyl-[acyl-carrier protein] O-methyltransferase (260 aa).

Belongs to the methyltransferase superfamily.

It carries out the reaction malonyl-[ACP] + S-adenosyl-L-methionine = malonyl-[ACP] methyl ester + S-adenosyl-L-homocysteine. It participates in cofactor biosynthesis; biotin biosynthesis. In terms of biological role, converts the free carboxyl group of a malonyl-thioester to its methyl ester by transfer of a methyl group from S-adenosyl-L-methionine (SAM). It allows to synthesize pimeloyl-ACP via the fatty acid synthetic pathway. The polypeptide is Malonyl-[acyl-carrier protein] O-methyltransferase (Haemophilus influenzae (strain ATCC 51907 / DSM 11121 / KW20 / Rd)).